Reading from the N-terminus, the 139-residue chain is Phosphoribosyl-AMP cyclohydrolase (139 aa).

Mg(2+) is bound at residue aspartate 91. Cysteine 92 contacts Zn(2+). The Mg(2+) site is built by aspartate 93 and aspartate 95. Zn(2+) contacts are provided by cysteine 110 and cysteine 117.

This sequence belongs to the PRA-CH family. In terms of assembly, homodimer. The cofactor is Mg(2+). Zn(2+) serves as cofactor.

It is found in the cytoplasm. The enzyme catalyses 1-(5-phospho-beta-D-ribosyl)-5'-AMP + H2O = 1-(5-phospho-beta-D-ribosyl)-5-[(5-phospho-beta-D-ribosylamino)methylideneamino]imidazole-4-carboxamide. Its pathway is amino-acid biosynthesis; L-histidine biosynthesis; L-histidine from 5-phospho-alpha-D-ribose 1-diphosphate: step 3/9. Functionally, catalyzes the hydrolysis of the adenine ring of phosphoribosyl-AMP. The chain is Phosphoribosyl-AMP cyclohydrolase from Brucella abortus (strain S19).